The following is a 157-amino-acid chain: Small ribosomal subunit protein uS7 (157 aa).

It belongs to the universal ribosomal protein uS7 family. In terms of assembly, part of the 30S ribosomal subunit. Contacts proteins S9 and S11.

One of the primary rRNA binding proteins, it binds directly to 16S rRNA where it nucleates assembly of the head domain of the 30S subunit. Is located at the subunit interface close to the decoding center, probably blocks exit of the E-site tRNA. This chain is Small ribosomal subunit protein uS7, found in Leptospira interrogans serogroup Icterohaemorrhagiae serovar copenhageni (strain Fiocruz L1-130).